The primary structure comprises 337 residues: Putative long-chain-alcohol O-fatty-acyltransferase 10 (337 aa).

Helical transmembrane passes span 7-27, 38-58, 59-79, 82-102, 142-162, 228-248, 254-274, and 285-305; these read SFVKVWGSAIISVSYCYYIPS, SVLPVCVLFLVLPLFFVFTIF, SSTTAFCLSILANFKLILFAF, GPLLPLPTNLFRFICFTCLPI, ILLLGLYPLHLYIVLDVLLTI, MGCMTTFFVSGLIHELVYFYI, TLEVTWFFVLHGVCTAMEIAV, and MLLRLITVGFLVVTGDLLFFG.

Belongs to the wax synthase family.

The protein localises to the membrane. The enzyme catalyses a long chain fatty alcohol + a fatty acyl-CoA = a wax ester + CoA. In terms of biological role, catalyzes the final step in the synthesis of long-chain linear esters (waxes). This is Putative long-chain-alcohol O-fatty-acyltransferase 10 from Arabidopsis thaliana (Mouse-ear cress).